The following is a 349-amino-acid chain: MTFLRIATKRAIYLHRPANPALPTSSILPVLHSTNVATRVPSPCAIRHSSHSPLGAAQANPRKKVTMQTLRNLYKKGEPITMLTAHDFPSAHVADAAGMDMILVGDSLAMVALGMQDTSEVTLDDMLVHCRSVARAAQSAFTVSDLPMGSYEVSPEQALQSAIRIVKEGRVQGVKLEGGEEMAPAIKRITTAGIPVVGHIGLTPQRQNALGGFRVQGKSTTDALKLLKDALAVQEAGAFMIVIEAVPPEIASIVTQKLSVPTIGIGAGNGCSGQVLVQIDMTGNFPPGRFLPKFVKQYANVWNEALQGIQQYREEVKSRAYPAEQHTYPIPKEELVEFQKAVDELPEEK.

It belongs to the PanB family.

It carries out the reaction 3-methyl-2-oxobutanoate + (6R)-5,10-methylene-5,6,7,8-tetrahydrofolate + H2O = 2-dehydropantoate + (6S)-5,6,7,8-tetrahydrofolate. The protein operates within cofactor biosynthesis; (R)-pantothenate biosynthesis; (R)-pantoate from 3-methyl-2-oxobutanoate: step 1/2. This Emericella nidulans (strain FGSC A4 / ATCC 38163 / CBS 112.46 / NRRL 194 / M139) (Aspergillus nidulans) protein is 3-methyl-2-oxobutanoate hydroxymethyltransferase (panB).